The chain runs to 188 residues: Elongation factor P-like protein (188 aa).

The protein belongs to the elongation factor P family.

The polypeptide is Elongation factor P-like protein (Vibrio vulnificus (strain CMCP6)).